The chain runs to 186 residues: Ribosome-recycling factor (186 aa).

The protein belongs to the RRF family.

Its subcellular location is the cytoplasm. Its function is as follows. Responsible for the release of ribosomes from messenger RNA at the termination of protein biosynthesis. May increase the efficiency of translation by recycling ribosomes from one round of translation to another. This Rickettsia bellii (strain OSU 85-389) protein is Ribosome-recycling factor.